Reading from the N-terminus, the 206-residue chain is Small ribosomal subunit protein uS4 (206 aa).

Residues 15–46 form a disordered region; the sequence is MGENIWGRPKSPVNKREYGPGQHGQRRKNKLS. The S4 RNA-binding domain maps to 94–157; it reads RRLDAIVYRA…RQLAIVLEAT (64 aa).

It belongs to the universal ribosomal protein uS4 family. As to quaternary structure, part of the 30S ribosomal subunit. Contacts protein S5. The interaction surface between S4 and S5 is involved in control of translational fidelity.

In terms of biological role, one of the primary rRNA binding proteins, it binds directly to 16S rRNA where it nucleates assembly of the body of the 30S subunit. With S5 and S12 plays an important role in translational accuracy. This chain is Small ribosomal subunit protein uS4, found in Cereibacter sphaeroides (strain ATCC 17025 / ATH 2.4.3) (Rhodobacter sphaeroides).